Consider the following 798-residue polypeptide: MEASGKLICRQRQVLFSFLLLGLSLAGAAEPRSYSVVEETEGSSFVTNLAKDLGLEQREFSRRGVRVVSRGNKLHLQLNQETADLLLNEKLDREDLCGHTEPCVLRFQVLLESPFEFFQAELQVIDINDHSPVFLDKQMLVKVSESSPPGTTFPLKNAEDLDVGQNNIENYIISPNSYFRVLTRKRSDGRKYPELVLDKALDREEEAELRLTLTALDGGSPPRSGTAQVYIEVLDVNDNAPEFEQPFYRVQISEDSPVGFLVVKVSATDVDTGVNGEISYSLFQASEEIGKTFKINPLTGEIELKKQLDFEKLQSYEVNIEARDAGTFSGKCTVLIQVIDVNDHAPEVTMSAFTSPIPENAPETVVALFSVSDLDSGENGKISCSIQEDLPFLLKSAENFYTLLTERPLDRESRAEYNITITVTDLGTPMLITQLNMTVLIADVNDNAPAFTQTSYTLFVRENNSPALHIRSVSATDRDSGTNAQVTYSLLPPQDPHLPLTSLVSINADNGHLFALRSLDYEALQGFQFRVGASDHGSPALSSEALVRVVVLDANDNSPFVLYPLQNGSAPCTELVPRAAEPGYLVTKVVAVDGDSGQNAWLSYQLLKATELGLFGVWAHNGEVRTARLLSERDAAKHRLVVLVKDNGEPPRSATATLHVLLVDGFSQPYLPLPEAAPTQAQADLLTVYLVVALASVSSLFLFSVLLFVAVRLCRRSRAASVGRCLVPEGPLPGHLVDMSGTRTLSQSYQYEVCLAGGSGTNEFKFLKPIIPNFPPQCPGKEIQGNSTFPNNFGFNIQ.

The first 28 residues, 1 to 28 (MEASGKLICRQRQVLFSFLLLGLSLAGA), serve as a signal peptide directing secretion. Residues 29 to 690 (AEPRSYSVVE…AQADLLTVYL (662 aa)) lie on the Extracellular side of the membrane. Cadherin domains follow at residues 36–134 (VVEE…SPVF), 139–243 (MLVK…APEF), 248–348 (YRVQ…APEV), 353–451 (FTSP…APAF), and 456–561 (YTLF…SPFV). 2 N-linked (GlcNAc...) asparagine glycosylation sites follow: Asn-418 and Asn-436. N-linked (GlcNAc...) asparagine glycosylation is present at Asn-567. The region spanning 568–671 (GSAPCTELVP…LVDGFSQPYL (104 aa)) is the Cadherin 6 domain. Residues 691–711 (VVALASVSSLFLFSVLLFVAV) form a helical membrane-spanning segment. The Cytoplasmic portion of the chain corresponds to 712-798 (RLCRRSRAAS…FPNNFGFNIQ (87 aa)).

The protein resides in the cell membrane. Functionally, potential calcium-dependent cell-adhesion protein. May be involved in the establishment and maintenance of specific neuronal connections in the brain. In Homo sapiens (Human), this protein is Protocadherin beta-13 (PCDHB13).